Reading from the N-terminus, the 182-residue chain is Adenine phosphoribosyltransferase (182 aa).

Belongs to the purine/pyrimidine phosphoribosyltransferase family. In terms of assembly, homodimer.

The protein resides in the cytoplasm. It catalyses the reaction AMP + diphosphate = 5-phospho-alpha-D-ribose 1-diphosphate + adenine. It participates in purine metabolism; AMP biosynthesis via salvage pathway; AMP from adenine: step 1/1. Catalyzes a salvage reaction resulting in the formation of AMP, that is energically less costly than de novo synthesis. The sequence is that of Adenine phosphoribosyltransferase from Bordetella pertussis (strain Tohama I / ATCC BAA-589 / NCTC 13251).